The sequence spans 291 residues: 4-diphosphocytidyl-2-C-methyl-D-erythritol kinase (291 aa).

Residue K11 is part of the active site. Position 97–107 (97–107 (PVAAGIGGGSS)) interacts with ATP. Residue D139 is part of the active site.

Belongs to the GHMP kinase family. IspE subfamily.

The catalysed reaction is 4-CDP-2-C-methyl-D-erythritol + ATP = 4-CDP-2-C-methyl-D-erythritol 2-phosphate + ADP + H(+). Its pathway is isoprenoid biosynthesis; isopentenyl diphosphate biosynthesis via DXP pathway; isopentenyl diphosphate from 1-deoxy-D-xylulose 5-phosphate: step 3/6. Its function is as follows. Catalyzes the phosphorylation of the position 2 hydroxy group of 4-diphosphocytidyl-2C-methyl-D-erythritol. This Methylorubrum extorquens (strain CM4 / NCIMB 13688) (Methylobacterium extorquens) protein is 4-diphosphocytidyl-2-C-methyl-D-erythritol kinase.